Here is a 247-residue protein sequence, read N- to C-terminus: Chymase (247 aa).

A signal peptide spans 1–19 (MLLLPLPLLLLFLCSRAEA). A propeptide spans 20 to 21 (GE) (activation peptide). Positions 22–245 (IIGGTECKPH…YRPWINKILQ (224 aa)) constitute a Peptidase S1 domain. C51 and C67 are joined by a disulfide. The Charge relay system role is filled by H66. 2 N-linked (GlcNAc...) asparagine glycosylation sites follow: N80 and N103. The Charge relay system role is filled by D110. Cystine bridges form between C144–C209 and C175–C188. S203 functions as the Charge relay system in the catalytic mechanism.

It belongs to the peptidase S1 family. Granzyme subfamily.

Its subcellular location is the secreted. It is found in the cytoplasmic granule. The catalysed reaction is Preferential cleavage: Phe-|-Xaa &gt; Tyr-|-Xaa &gt; Trp-|-Xaa &gt; Leu-|-Xaa.. Its function is as follows. Major secreted protease of mast cells with suspected roles in vasoactive peptide generation, extracellular matrix degradation, and regulation of gland secretion. This Papio hamadryas (Hamadryas baboon) protein is Chymase (CMA1).